The primary structure comprises 1087 residues: Error-prone DNA polymerase 2 (1087 aa).

Residues 1033-1064 form a disordered region; sequence DGAFRPPTGRGDEFAHGSPGSADSRGKAPPGV.

The protein belongs to the DNA polymerase type-C family. DnaE2 subfamily.

The protein resides in the cytoplasm. It catalyses the reaction DNA(n) + a 2'-deoxyribonucleoside 5'-triphosphate = DNA(n+1) + diphosphate. Its function is as follows. DNA polymerase involved in damage-induced mutagenesis and translesion synthesis (TLS). It is not the major replicative DNA polymerase. This chain is Error-prone DNA polymerase 2, found in Rhizobium meliloti (strain 1021) (Ensifer meliloti).